Here is a 192-residue protein sequence, read N- to C-terminus: Phosphoheptose isomerase (192 aa).

Residues 37–192 enclose the SIS domain; that stretch reads LADSFKAGGK…IQLIEKEMVK (156 aa). 52-54 is a substrate binding site; it reads NGG. Residues His61 and Glu65 each coordinate Zn(2+). Substrate contacts are provided by residues Glu65, 93–94, 119–121, Ser124, and Gln172; these read ND and STS. Gln172 and His180 together coordinate Zn(2+).

This sequence belongs to the SIS family. GmhA subfamily. As to quaternary structure, homotetramer. Zn(2+) serves as cofactor.

The protein resides in the cytoplasm. It carries out the reaction 2 D-sedoheptulose 7-phosphate = D-glycero-alpha-D-manno-heptose 7-phosphate + D-glycero-beta-D-manno-heptose 7-phosphate. Its pathway is carbohydrate biosynthesis; D-glycero-D-manno-heptose 7-phosphate biosynthesis; D-glycero-alpha-D-manno-heptose 7-phosphate and D-glycero-beta-D-manno-heptose 7-phosphate from sedoheptulose 7-phosphate: step 1/1. Catalyzes the isomerization of sedoheptulose 7-phosphate in D-glycero-D-manno-heptose 7-phosphate. The chain is Phosphoheptose isomerase from Shigella dysenteriae serotype 1 (strain Sd197).